Here is a 248-residue protein sequence, read N- to C-terminus: Pyridoxine 5'-phosphate synthase (248 aa).

Asn-12 contacts 3-amino-2-oxopropyl phosphate. Position 14–15 (14–15 (DH)) interacts with 1-deoxy-D-xylulose 5-phosphate. Arg-23 contributes to the 3-amino-2-oxopropyl phosphate binding site. The active-site Proton acceptor is His-48. 1-deoxy-D-xylulose 5-phosphate-binding residues include Arg-50 and His-55. Glu-75 functions as the Proton acceptor in the catalytic mechanism. Residue Thr-105 participates in 1-deoxy-D-xylulose 5-phosphate binding. The active-site Proton donor is His-196. Residues Gly-197 and 218–219 (GH) each bind 3-amino-2-oxopropyl phosphate.

The protein belongs to the PNP synthase family. As to quaternary structure, homooctamer; tetramer of dimers.

The protein localises to the cytoplasm. The catalysed reaction is 3-amino-2-oxopropyl phosphate + 1-deoxy-D-xylulose 5-phosphate = pyridoxine 5'-phosphate + phosphate + 2 H2O + H(+). It participates in cofactor biosynthesis; pyridoxine 5'-phosphate biosynthesis; pyridoxine 5'-phosphate from D-erythrose 4-phosphate: step 5/5. In terms of biological role, catalyzes the complicated ring closure reaction between the two acyclic compounds 1-deoxy-D-xylulose-5-phosphate (DXP) and 3-amino-2-oxopropyl phosphate (1-amino-acetone-3-phosphate or AAP) to form pyridoxine 5'-phosphate (PNP) and inorganic phosphate. The protein is Pyridoxine 5'-phosphate synthase of Pseudomonas aeruginosa (strain UCBPP-PA14).